Here is a 449-residue protein sequence, read N- to C-terminus: MGKKYFGTDGVRGQTNSFPMTAENALRLGMAAGRYFVRHTGRHSVVIGKDTRLSGYMIESALVAGFTSVGMDVFQFGPLPTPAVALMTRSLRADLGVMITASHNPYHDNGMKLFGPDGRKLDDKAELEIEALMDGSLVDGLAAPSDLGRAKRVDDAQARYVEIVKSSFPRAQRLSNLRLVVDCANGAGYKVAPAALWELGADVIPIGVEPNGFNVNEECGSTAPARLSKEVIKYRADLGIALDGDGDRVVLCDEKGRVIDGDQILGLLAGHWQDIGELRHPAIVSTVMSNLGLEQYLAGRGIALERTRVGDRYVSERMRETGINLGGEASGHIVMPDYSPTGDGLIAALQVLRVLGDSGKRASELLKVFKPAPQLLENVRVPRGRKPLESEAVKAAIAEAEVRMGVAGRLVVRASGTEPVVRVMAEGEQKLIRSVVDDVRGAIETVAQG.

Residue serine 102 is the Phosphoserine intermediate of the active site. The Mg(2+) site is built by serine 102, aspartate 243, aspartate 245, and aspartate 247. The residue at position 102 (serine 102) is a Phosphoserine.

It belongs to the phosphohexose mutase family. Mg(2+) serves as cofactor. Post-translationally, activated by phosphorylation.

It catalyses the reaction alpha-D-glucosamine 1-phosphate = D-glucosamine 6-phosphate. Its function is as follows. Catalyzes the conversion of glucosamine-6-phosphate to glucosamine-1-phosphate. This is Phosphoglucosamine mutase from Maricaulis maris (strain MCS10) (Caulobacter maris).